The following is a 349-amino-acid chain: N-acetyl-gamma-glutamyl-phosphate reductase (349 aa).

Cysteine 152 is an active-site residue.

Belongs to the NAGSA dehydrogenase family. Type 1 subfamily.

The protein resides in the cytoplasm. The enzyme catalyses N-acetyl-L-glutamate 5-semialdehyde + phosphate + NADP(+) = N-acetyl-L-glutamyl 5-phosphate + NADPH + H(+). The protein operates within amino-acid biosynthesis; L-arginine biosynthesis; N(2)-acetyl-L-ornithine from L-glutamate: step 3/4. In terms of biological role, catalyzes the NADPH-dependent reduction of N-acetyl-5-glutamyl phosphate to yield N-acetyl-L-glutamate 5-semialdehyde. This is N-acetyl-gamma-glutamyl-phosphate reductase from Clavibacter sepedonicus (Clavibacter michiganensis subsp. sepedonicus).